Reading from the N-terminus, the 29-residue chain is Chassatide C10 (29 aa).

The segment at residues 1-29 (GEYCGESCYLIPCFTPGCYCVSRQCVNKN) is a cross-link (cyclopeptide (Gly-Asn)). 3 disulfides stabilise this stretch: Cys4–Cys18, Cys8–Cys20, and Cys13–Cys25.

In terms of processing, this is a cyclic peptide.

Its function is as follows. Probably participates in a plant defense mechanism. Has no activity against bacteria up to a concentration of 80 uM. Has cytotoxic but no hemolytic activity. The polypeptide is Chassatide C10 (Chassalia chartacea (Chassalia curviflora)).